A 453-amino-acid polypeptide reads, in one-letter code: MGTHDMSPNASHSYIYRVLSDILEFPDNEQRMWWHSVAPMFAEMLRACGYDIHEQYKILGIWKKAVIPFLGCYPTNDGPRWLSILTRYGTPFELSLNCSHRLVRYTFEPINAATGTDKDPFNTQAIWESLSQLRRLNGDVDTELFNHFKANLTVDNAESAHLVESNLAGSKIRTQNKLALDLQNGSFVVKAYFYPTLKSAATGRSITDLMLSSVRQQVQKWSPTLAQPLSVLEEYIEARGPDSTASPRLLSCDLINPERARTKIYLLERQVSIEAMEDLWTLGGRRKSDSALAALDIIREIWSLIQLPPCLASYPSGYLPLGTVPDEQLPLMVNYTLRPDDPMPEPQVYFTTFGQNDLHVTNALTAFFERQGWTELAESYKENLRAYYPHADQETANYIHAYVSFSYRKGVSYMSVYLQTLETGDWPITYSPKRQYLCNEHPIHLKELAKACA.

L-tryptophan contacts are provided by residues 84–85 (IL) and Glu93. Arg104, Lys190, and Tyr192 together coordinate substrate. The L-tryptophan site is built by Tyr194 and Arg248. The substrate site is built by Arg261, Lys263, Tyr265, Gln347, and Tyr349.

The protein belongs to the tryptophan dimethylallyltransferase family. In terms of assembly, homodimer.

It carries out the reaction L-tryptophan + dimethylallyl diphosphate = 4-(3-methylbut-2-enyl)-L-tryptophan + diphosphate. It functions in the pathway alkaloid biosynthesis. Tryptophan dimethylallyltransferase; part of the gene cluster that mediates the biosynthesis of communesins, a prominent class of indole alkaloids with great potential as pharmaceuticals. Communesins are biosynthesized by the coupling of tryptamine and aurantioclavine, two building blocks derived from L-tryptophan. The L-tryptophan decarboxylase cnsB converts L-tryptophan to tryptamine, whereas the tryptophan dimethylallyltransferase cnsF converts L-tryptophan to 4-dimethylallyl tryptophan which is further transformed to aurantioclavine by the aurantioclavine synthase cnsA, probably aided by the catalase cnsD. The cytochrome P450 monooxygenase cnsC catalyzes the heterodimeric coupling between the two different indole moieties, tryptamine and aurantioclavine, to construct vicinal quaternary stereocenters and yield the heptacyclic communesin scaffold. The O-methyltransferase cnsE then methylates the communesin scaffold to produce communesin K, the simplest characterized communesin that contains the heptacyclic core. The dioxygenase cnsJ converts communesin K into communesin I. Acylation to introduce the hexadienyl group at position N16 of communesin I by the acyltransferase cnsK leads to the production of communesin B. The hexadienyl group is produced by the highly reducing polyketide synthase cnsI, before being hydrolytically removed from cnsI by the serine hydrolase cnsH, converted into hexadienyl-CoA by the CoA ligase cnsG, and then transferred to communesin I by cnsK. Surprisingly, cnsK may also be a promiscuous acyltransferase that can tolerate a range of acyl groups, including acetyl-, propionyl-, and butyryl-CoA, which lead to communesins A, G and H respectively. The roles of the alpha-ketoglutarate-dependent dioxygenases cnsM and cnsP have still to be determined. The protein is Tryptophan dimethylallyltransferase cnsF of Penicillium expansum (Blue mold rot fungus).